The following is a 65-amino-acid chain: UPF0370 protein Ent638_2968 (65 aa).

Residues 4-24 (LSKYWWILVLVFLVGVLLNVI) form a helical membrane-spanning segment. The disordered stretch occupies residues 39-65 (KPELPPHRDFNDKWDDDDNWPKKDQKK). Over residues 42-65 (LPPHRDFNDKWDDDDNWPKKDQKK) the composition is skewed to basic and acidic residues.

Belongs to the UPF0370 family.

The protein localises to the cell membrane. The chain is UPF0370 protein Ent638_2968 from Enterobacter sp. (strain 638).